Here is a 469-residue protein sequence, read N- to C-terminus: A-type ATP synthase subunit B (469 aa).

It belongs to the ATPase alpha/beta chains family. Has multiple subunits with at least A(3), B(3), C, D, E, F, H, I and proteolipid K(x).

The protein resides in the cell membrane. In terms of biological role, component of the A-type ATP synthase that produces ATP from ADP in the presence of a proton gradient across the membrane. The B chain is a regulatory subunit. This Staphylothermus marinus (strain ATCC 43588 / DSM 3639 / JCM 9404 / F1) protein is A-type ATP synthase subunit B.